A 157-amino-acid polypeptide reads, in one-letter code: Ubiquitin-like protein 4A (157 aa).

The Ubiquitin-like domain maps to 1–76 (MQLTVKALQG…LNLVVKPLEK (76 aa)). A Glycyl lysine isopeptide (Lys-Gly) (interchain with G-Cter in ubiquitin) cross-link involves residue lysine 48. Phosphoserine is present on serine 90. A required and sufficient for interaction with BAG6 region spans residues 96–138 (WQLISKVLARHFSAADASRVLEQLQRDYERSLSRLTLDDIERL).

Component of the BAG6/BAT3 complex, at least composed of BAG6, UBL4A and GET4/TRC35. Interacts with BAG6; the interaction is direct and required for UBL4A protein stability. Interacts with USP13; may be indirect via BAG6. In terms of processing, polyubiquitinated. Ubiquitination by AMFR and deubiquitination by USP13 may regulate the interaction between the BAG6/BAT3 complex and SGTA and therefore may regulate client proteins fate.

The protein resides in the cytoplasm. The protein localises to the cytosol. It is found in the nucleus. Functionally, as part of a cytosolic protein quality control complex, the BAG6/BAT3 complex, maintains misfolded and hydrophobic patches-containing proteins in a soluble state and participates in their proper delivery to the endoplasmic reticulum or alternatively can promote their sorting to the proteasome where they undergo degradation. The BAG6/BAT3 complex is involved in the post-translational delivery of tail-anchored/type II transmembrane proteins to the endoplasmic reticulum membrane. Recruited to ribosomes, it interacts with the transmembrane region of newly synthesized tail-anchored proteins and together with SGTA and ASNA1 mediates their delivery to the endoplasmic reticulum. Client proteins that cannot be properly delivered to the endoplasmic reticulum are ubiquitinated and sorted to the proteasome. Similarly, the BAG6/BAT3 complex also functions as a sorting platform for proteins of the secretory pathway that are mislocalized to the cytosol either delivering them to the proteasome for degradation or to the endoplasmic reticulum. The BAG6/BAT3 complex also plays a role in the endoplasmic reticulum-associated degradation (ERAD), a quality control mechanism that eliminates unwanted proteins of the endoplasmic reticulum through their retrotranslocation to the cytosol and their targeting to the proteasome. It maintains these retrotranslocated proteins in an unfolded yet soluble state condition in the cytosol to ensure their proper delivery to the proteasome. This Homo sapiens (Human) protein is Ubiquitin-like protein 4A.